The following is a 428-amino-acid chain: 3-phosphoshikimate 1-carboxyvinyltransferase (428 aa).

3-phosphoshikimate contacts are provided by K22, S23, and R27. A phosphoenolpyruvate-binding site is contributed by K22. Residues G94 and R122 each coordinate phosphoenolpyruvate. 4 residues coordinate 3-phosphoshikimate: S167, Q169, D314, and K341. Q169 provides a ligand contact to phosphoenolpyruvate. D314 acts as the Proton acceptor in catalysis. R345 and R387 together coordinate phosphoenolpyruvate.

Belongs to the EPSP synthase family. Monomer.

It is found in the cytoplasm. It carries out the reaction 3-phosphoshikimate + phosphoenolpyruvate = 5-O-(1-carboxyvinyl)-3-phosphoshikimate + phosphate. It functions in the pathway metabolic intermediate biosynthesis; chorismate biosynthesis; chorismate from D-erythrose 4-phosphate and phosphoenolpyruvate: step 6/7. In terms of biological role, catalyzes the transfer of the enolpyruvyl moiety of phosphoenolpyruvate (PEP) to the 5-hydroxyl of shikimate-3-phosphate (S3P) to produce enolpyruvyl shikimate-3-phosphate and inorganic phosphate. In Geotalea uraniireducens (strain Rf4) (Geobacter uraniireducens), this protein is 3-phosphoshikimate 1-carboxyvinyltransferase.